Reading from the N-terminus, the 281-residue chain is Ermin (281 aa).

Polar residues-rich tracts occupy residues 1 to 12 (MTDTPETLSGTE), 21 to 31 (NGQQPSSQTRQ), and 135 to 147 (AQQQ…DAST). Disordered stretches follow at residues 1–80 (MTDT…KILN), 110–147 (REGH…DAST), and 167–248 (KCDE…GDIA). The segment covering 169–197 (DEEEEEEEEVWNEEINEEDVDECAEEEDE) has biased composition (acidic residues). A compositionally biased stretch (basic and acidic residues) spans 198–223 (VRVIEFKRKHREGSPLKEESLAREDS). Phosphoserine is present on residues S211, S223, S227, and S230. Position 234 is a phosphothreonine (T234). Residues 262-281 (KIRKGNTKQRIDEFESMMHL) form a binds actin region.

As to quaternary structure, binds actin. Brain and spinal cord. Exclusively expressed by the oligodendrocytes. Appears at a late stage during myelination, and in the mature nerves, it is localized to the outer cytoplasmic lip of the myelin sheath and the paranodal loops.

It localises to the cytoplasm. The protein localises to the cytoskeleton. Plays a role in cytoskeletal rearrangements during the late wrapping and/or compaction phases of myelinogenesis as well as in maintenance and stability of myelin sheath in the adult. May play an important role in late-stage oligodendroglia maturation, myelin/Ranvier node formation during CNS development, and in the maintenance and plasticity of related structures in the mature CNS. This chain is Ermin (Ermn), found in Mus musculus (Mouse).